Reading from the N-terminus, the 394-residue chain is 1-deoxy-D-xylulose 5-phosphate reductoisomerase (394 aa).

NADPH-binding residues include Thr-10, Gly-11, Ser-12, Ile-13, Gly-38, Arg-39, Asn-40, and Asn-123. Lys-124 serves as a coordination point for 1-deoxy-D-xylulose 5-phosphate. Residue Glu-125 coordinates NADPH. Asp-149 serves as a coordination point for Mn(2+). 4 residues coordinate 1-deoxy-D-xylulose 5-phosphate: Ser-150, Glu-151, Ser-175, and His-198. Glu-151 contacts Mn(2+). Gly-204 is a binding site for NADPH. 1-deoxy-D-xylulose 5-phosphate-binding residues include Ser-211, Asn-216, Lys-217, and Glu-220. Glu-220 is a binding site for Mn(2+).

The protein belongs to the DXR family. The cofactor is Mg(2+). It depends on Mn(2+) as a cofactor.

The catalysed reaction is 2-C-methyl-D-erythritol 4-phosphate + NADP(+) = 1-deoxy-D-xylulose 5-phosphate + NADPH + H(+). Its pathway is isoprenoid biosynthesis; isopentenyl diphosphate biosynthesis via DXP pathway; isopentenyl diphosphate from 1-deoxy-D-xylulose 5-phosphate: step 1/6. Functionally, catalyzes the NADPH-dependent rearrangement and reduction of 1-deoxy-D-xylulose-5-phosphate (DXP) to 2-C-methyl-D-erythritol 4-phosphate (MEP). In Cereibacter sphaeroides (strain ATCC 17025 / ATH 2.4.3) (Rhodobacter sphaeroides), this protein is 1-deoxy-D-xylulose 5-phosphate reductoisomerase.